We begin with the raw amino-acid sequence, 271 residues long: Formamidopyrimidine-DNA glycosylase (271 aa).

Catalysis depends on proline 2, which acts as the Schiff-base intermediate with DNA. Glutamate 3 serves as the catalytic Proton donor. The active-site Proton donor; for beta-elimination activity is lysine 58. Residues histidine 91, arginine 110, and arginine 152 each coordinate DNA. The segment at 237–271 (NVYGRGGKACKKCRKPLTEKKLGQRTTVYCTHCQK) adopts an FPG-type zinc-finger fold. The Proton donor; for delta-elimination activity role is filled by arginine 261.

The protein belongs to the FPG family. In terms of assembly, monomer. The cofactor is Zn(2+).

It catalyses the reaction Hydrolysis of DNA containing ring-opened 7-methylguanine residues, releasing 2,6-diamino-4-hydroxy-5-(N-methyl)formamidopyrimidine.. It carries out the reaction 2'-deoxyribonucleotide-(2'-deoxyribose 5'-phosphate)-2'-deoxyribonucleotide-DNA = a 3'-end 2'-deoxyribonucleotide-(2,3-dehydro-2,3-deoxyribose 5'-phosphate)-DNA + a 5'-end 5'-phospho-2'-deoxyribonucleoside-DNA + H(+). Involved in base excision repair of DNA damaged by oxidation or by mutagenic agents. Acts as a DNA glycosylase that recognizes and removes damaged bases. Has a preference for oxidized purines, such as 7,8-dihydro-8-oxoguanine (8-oxoG). Has AP (apurinic/apyrimidinic) lyase activity and introduces nicks in the DNA strand. Cleaves the DNA backbone by beta-delta elimination to generate a single-strand break at the site of the removed base with both 3'- and 5'-phosphates. In Saccharophagus degradans (strain 2-40 / ATCC 43961 / DSM 17024), this protein is Formamidopyrimidine-DNA glycosylase.